A 78-amino-acid polypeptide reads, in one-letter code: Acyl carrier protein (78 aa).

The 76-residue stretch at 2–77 (STIEERVKKI…AAIDYIEAAN (76 aa)) folds into the Carrier domain. At Ser-37 the chain carries O-(pantetheine 4'-phosphoryl)serine.

It belongs to the acyl carrier protein (ACP) family. In terms of processing, 4'-phosphopantetheine is transferred from CoA to a specific serine of apo-ACP by AcpS. This modification is essential for activity because fatty acids are bound in thioester linkage to the sulfhydryl of the prosthetic group.

Its subcellular location is the cytoplasm. Its pathway is lipid metabolism; fatty acid biosynthesis. Functionally, carrier of the growing fatty acid chain in fatty acid biosynthesis. This Edwardsiella ictaluri (strain 93-146) protein is Acyl carrier protein.